The following is a 222-amino-acid chain: L-serine dehydratase, beta chain (222 aa).

One can recognise an ACT domain in the interval 150–222 (TILLEYPEQR…RFTTAKYVEV (73 aa)).

The protein belongs to the iron-sulfur dependent L-serine dehydratase family. As to quaternary structure, heterooctamer of four alpha chains and four beta chains. [4Fe-4S] cluster is required as a cofactor.

It catalyses the reaction L-serine = pyruvate + NH4(+). Its pathway is carbohydrate biosynthesis; gluconeogenesis. In Peptoniphilus asaccharolyticus (Peptostreptococcus asaccharolyticus), this protein is L-serine dehydratase, beta chain (sdhB).